The primary structure comprises 329 residues: D-alanine--D-alanine ligase (329 aa).

The ATP-grasp domain maps to 120–326; it reads KLWYDALDIP…FHEFLEDCIN (207 aa). 150–205 lines the ATP pocket; sequence AFEKWGKVFVKAARQGSSVGCYSVAEKQAIAKAVNDAFGYSDQVLVEKAVKPRELE. Asp-280, Glu-293, and Asn-295 together coordinate Mg(2+).

This sequence belongs to the D-alanine--D-alanine ligase family. Mg(2+) is required as a cofactor. The cofactor is Mn(2+).

Its subcellular location is the cytoplasm. It carries out the reaction 2 D-alanine + ATP = D-alanyl-D-alanine + ADP + phosphate + H(+). It functions in the pathway cell wall biogenesis; peptidoglycan biosynthesis. Cell wall formation. In Vibrio parahaemolyticus serotype O3:K6 (strain RIMD 2210633), this protein is D-alanine--D-alanine ligase.